Reading from the N-terminus, the 177-residue chain is Isopentenyl-diphosphate Delta-isomerase (177 aa).

Mn(2+) is bound by residues His-22 and His-28. One can recognise a Nudix hydrolase domain in the interval 26–160 (LRHKAISVFV…PERFTPWLRI (135 aa)). Cys-62 is a catalytic residue. His-64 lines the Mn(2+) pocket. Glu-82 provides a ligand contact to Mg(2+). 2 residues coordinate Mn(2+): Glu-108 and Glu-110. Glu-110 is a catalytic residue.

Belongs to the IPP isomerase type 1 family. Requires Mg(2+) as cofactor. Mn(2+) is required as a cofactor.

The protein localises to the cytoplasm. The enzyme catalyses isopentenyl diphosphate = dimethylallyl diphosphate. The protein operates within isoprenoid biosynthesis; dimethylallyl diphosphate biosynthesis; dimethylallyl diphosphate from isopentenyl diphosphate: step 1/1. Its pathway is porphyrin-containing compound metabolism; chlorophyll biosynthesis. Its function is as follows. Catalyzes the 1,3-allylic rearrangement of the homoallylic substrate isopentenyl (IPP) to its highly electrophilic allylic isomer, dimethylallyl diphosphate (DMAPP). The sequence is that of Isopentenyl-diphosphate Delta-isomerase from Cereibacter sphaeroides (strain ATCC 17025 / ATH 2.4.3) (Rhodobacter sphaeroides).